An 806-amino-acid polypeptide reads, in one-letter code: SH3-containing GRB2-like protein 3-interacting protein 1 (806 aa).

Disordered stretches follow at residues M1 to K115 and S142 to T278. Basic and acidic residues-rich tracts occupy residues R16–G32 and P40–K54. Residues S78, S104, S105, S107, S149, S151, S156, and S169 each carry the phosphoserine modification. Residues T180 and T182 each carry the phosphothreonine modification. A phosphoserine mark is found at S236 and F243. Positions T245–P260 are enriched in pro residues. Residues T247 and T259 each carry the phosphothreonine modification. Phosphoserine occurs at positions 265, 274, 287, 289, 300, 316, and 319. The span at S265–A276 shows a compositional bias: polar residues. A compositionally biased stretch (basic and acidic residues) spans F315–T324. The interval F315–G533 is disordered. Residues T324, T328, and T335 each carry the phosphothreonine modification. Low complexity predominate over residues T335 to D345. A338 is subject to Phosphoserine. A compositionally biased stretch (pro residues) spans S346–V369. Position 371 is a phosphoserine (S371). Residues E377–Y392 are compositionally biased toward basic and acidic residues. S398 carries the phosphoserine modification. Phosphothreonine is present on T409. The span at T436 to S453 shows a compositional bias: low complexity. Positions T454–K473 are enriched in pro residues. 2 stretches are compositionally biased toward low complexity: residues S480–S490 and P497–T520. Residues S484, S505, and G533 each carry the phosphoserine modification. One can recognise an MHD domain in the interval T537 to D805. Interaction with DPF motifs-containing proteins regions lie at residues P539–T545, S571–P573, T645–N648, and S791–R796. A necessary and sufficient to mediate interaction with CANX region spans residues M627–N806.

In terms of assembly, interacts with proteins essential or regulating the formation of functional clathrin-coated pits. Interacts with CANX. Interacts with AP2A1. Interacts with EPS15. Interacts with SH3GL3. Interacts with AMPH. Interacts with ITSN1 (via SH3 domains). Interacts with and REPS1. In terms of tissue distribution, detected in brain, spinal cord and cerebellum.

The protein resides in the membrane. Its subcellular location is the clathrin-coated pit. In terms of biological role, may function in clathrin-mediated endocytosis. Has both a membrane binding/tubulating activity and the ability to recruit proteins essential to the formation of functional clathrin-coated pits. Has a preference for membranes enriched in phosphatidylserine and phosphoinositides and is required for the endocytosis of the transferrin receptor. May also bind tubulin. May play a role in the regulation of energy homeostasis. The chain is SH3-containing GRB2-like protein 3-interacting protein 1 (Sgip1) from Mus musculus (Mouse).